The primary structure comprises 197 residues: Glycerol-3-phosphate acyltransferase (197 aa).

5 helical membrane-spanning segments follow: residues 5 to 25 (IYIA…GLIL), 54 to 74 (GLAA…VIIA), 80 to 100 (AEAA…PVWL), 112 to 132 (IGVL…LWLA), and 153 to 173 (IFLW…LTLL).

This sequence belongs to the PlsY family. Probably interacts with PlsX.

The protein resides in the cell inner membrane. It carries out the reaction an acyl phosphate + sn-glycerol 3-phosphate = a 1-acyl-sn-glycero-3-phosphate + phosphate. It functions in the pathway lipid metabolism; phospholipid metabolism. Catalyzes the transfer of an acyl group from acyl-phosphate (acyl-PO(4)) to glycerol-3-phosphate (G3P) to form lysophosphatidic acid (LPA). This enzyme utilizes acyl-phosphate as fatty acyl donor, but not acyl-CoA or acyl-ACP. In Rhodopseudomonas palustris (strain HaA2), this protein is Glycerol-3-phosphate acyltransferase.